The sequence spans 138 residues: Transcription antitermination protein NusB (138 aa).

This sequence belongs to the NusB family.

Functionally, involved in transcription antitermination. Required for transcription of ribosomal RNA (rRNA) genes. Binds specifically to the boxA antiterminator sequence of the ribosomal RNA (rrn) operons. The protein is Transcription antitermination protein NusB of Alkaliphilus oremlandii (strain OhILAs) (Clostridium oremlandii (strain OhILAs)).